Reading from the N-terminus, the 219-residue chain is MKQSVIIVAGGKGLRMGSDLPKQFLPVGGKPVLMHTLEAFRKYDAMLQIILVLPREQQDFWKQLCEEHHFSVEHLVADGGETRFHSVKNGLALVQAPGLVGVHDGVRPFVTLEVIRRCYELAEQHKAVIPVVDVVETLRHLTDAGSETVSRTEYKLVQTPQVFEVELLKQAYGQEFTPFFTDDASVVEAMGVPVHLAEGNRENIKITTPFDLKIGSALL.

It belongs to the IspD/TarI cytidylyltransferase family. IspD subfamily.

The enzyme catalyses 2-C-methyl-D-erythritol 4-phosphate + CTP + H(+) = 4-CDP-2-C-methyl-D-erythritol + diphosphate. The protein operates within isoprenoid biosynthesis; isopentenyl diphosphate biosynthesis via DXP pathway; isopentenyl diphosphate from 1-deoxy-D-xylulose 5-phosphate: step 2/6. Catalyzes the formation of 4-diphosphocytidyl-2-C-methyl-D-erythritol from CTP and 2-C-methyl-D-erythritol 4-phosphate (MEP). The polypeptide is 2-C-methyl-D-erythritol 4-phosphate cytidylyltransferase (Bacteroides thetaiotaomicron (strain ATCC 29148 / DSM 2079 / JCM 5827 / CCUG 10774 / NCTC 10582 / VPI-5482 / E50)).